We begin with the raw amino-acid sequence, 357 residues long: Protein RecA (357 aa).

79 to 86 serves as a coordination point for ATP; that stretch reads GPESSGKT.

The protein belongs to the RecA family.

It is found in the cytoplasm. In terms of biological role, can catalyze the hydrolysis of ATP in the presence of single-stranded DNA, the ATP-dependent uptake of single-stranded DNA by duplex DNA, and the ATP-dependent hybridization of homologous single-stranded DNAs. It interacts with LexA causing its activation and leading to its autocatalytic cleavage. This chain is Protein RecA, found in Chloroherpeton thalassium (strain ATCC 35110 / GB-78).